The sequence spans 649 residues: Protein teflon (649 aa).

The C2H2-type 1 zinc-finger motif lies at 33 to 56; the sequence is LYCHFCRDLFTQLPEFLRHLQSNH. Residues 78–126 are disordered; the sequence is EQGKAHEDAQSAGHNSSSGDSSSLMNSEDSRAIEGSEDNSDNSPMKPEQ. Positions 88 to 104 are enriched in low complexity; it reads SAGHNSSSGDSSSLMNS. 2 consecutive C2H2-type zinc fingers follow at residues 599–621 and 625–648; these read YFCK…LISH and FQCT…RNAH.

It belongs to the Teflon family. Expressed at a low level in a variety of tissues, highest expression is in testis.

It localises to the nucleus. The protein localises to the chromosome. Functionally, specifically required in males for proper segregation of autosomal bivalents at meiosis I. Expression is required in the male germ line prior to spermatocyte stage S4. May have a role as a bridging molecule maintaining adhesion to hold autosome bivalents together via heterochromatic connections. This is Protein teflon from Drosophila melanogaster (Fruit fly).